The chain runs to 177 residues: O-acetyl-ADP-ribose deacetylase (177 aa).

Positions 1 to 175 constitute a Macro domain; the sequence is MNSRIHVIHG…LYQRLLTQQG (175 aa). Residues 11 to 12, Asn25, 33 to 35, and 122 to 126 each bind substrate; these read DI, GVD, and STGVY. Catalysis depends on Asp35, which acts as the Proton acceptor.

Belongs to the MacroD-type family. YmdB subfamily. As to quaternary structure, homodimer. Interacts with RNase III.

The catalysed reaction is 3''-O-acetyl-ADP-D-ribose + H2O = ADP-D-ribose + acetate + H(+). It catalyses the reaction 2''-O-acetyl-ADP-D-ribose + H2O = ADP-D-ribose + acetate + H(+). Its function is as follows. Deacetylates O-acetyl-ADP ribose to yield ADP-ribose and free acetate. Down-regulates ribonuclease 3 (RNase III) activity. Acts by interacting directly with the region of the ribonuclease that is required for dimerization/activation. This chain is O-acetyl-ADP-ribose deacetylase, found in Citrobacter rodentium (strain ICC168) (Citrobacter freundii biotype 4280).